A 212-amino-acid polypeptide reads, in one-letter code: Adenylate kinase (212 aa).

An ATP-binding site is contributed by 14–19 (GSGKGT). Residues 34–63 (STGDLFRKKISEDSQFAAQIQNYLSSGSYV) are NMP. AMP is bound by residues Thr-35, Arg-40, 61-63 (SYV), 89-92 (GYPR), and Gln-96. Residues 126 to 163 (QRLFCQKCQKSYNLLLAKPKNELKCDLDSTDLITRNDD) form an LID region. Arg-127 lines the ATP pocket. Zn(2+) contacts are provided by Cys-130 and Cys-133. Residue 136–137 (SY) coordinates ATP. Cys-150 and Asp-153 together coordinate Zn(2+). Residues Arg-160 and Arg-171 each contribute to the AMP site. Gln-199 contributes to the ATP binding site.

This sequence belongs to the adenylate kinase family. In terms of assembly, monomer.

It localises to the cytoplasm. The enzyme catalyses AMP + ATP = 2 ADP. It participates in purine metabolism; AMP biosynthesis via salvage pathway; AMP from ADP: step 1/1. Functionally, catalyzes the reversible transfer of the terminal phosphate group between ATP and AMP. Plays an important role in cellular energy homeostasis and in adenine nucleotide metabolism. The chain is Adenylate kinase from Mesomycoplasma hyopneumoniae (strain J / ATCC 25934 / NCTC 10110) (Mycoplasma hyopneumoniae).